The chain runs to 493 residues: MLALIVLCFILFFYIISRRHRGLCYPPGPTPLPIVGNLLSVLWESRKFKCHHLIWQSWSQKYGNLLGLRLGSINVVVVTGIELIREVSNREVFEGRPDGFFYTMRSFGKKLGLVFSDGPTWHRTRRFVLKYLKNFGYNSRFMNVYIGDECEALVQLRLADAGEPILVNQMFHITIVNILWRLVAGKRYDLEDQRLKELCSLVMRLFKLVDMSGGFLNFLPFLRHFVPRLIGFTELQEIHNALHQYLREIIKEHQENLQLGAPKDVIDAFLIDMLESQDDKPTLDDLQVVCLDLLEAGMETVTNTAVFMLLHVVRNEDVQRKLHQEIDDIIGRDRNPLLDDRIRMVYTEAVILETLRISTVASMGIPHMALNDAKLGNYIIPKGTFILLSLYELHHGPHWKDPETFRPERFLTKEGNILQDEWLIPFGIGKRRCIGEGLARSELFMFLTHILQKFHLRIPKNEPLPSTEPIDGLSLSAKQFRIIFEPRKTFKSI.

The signal sequence occupies residues 1 to 24; the sequence is MLALIVLCFILFFYIISRRHRGLC. Cys-433 contributes to the heme binding site.

It belongs to the cytochrome P450 family. The cofactor is heme. As to expression, constitutively expressed in corpora allata from the first instar larval to adult stages.

It catalyses the reaction (2E,6E)-farnesoate + reduced [NADPH--hemoprotein reductase] + O2 = juvenile hormone III carboxylate + oxidized [NADPH--hemoprotein reductase] + H2O + H(+). Functionally, catalyzes the conversion of farnesoate to juvenile hormone III acid in juvenile hormone biosynthesis. The protein is Farnesoate epoxidase of Bombyx mori (Silk moth).